The sequence spans 871 residues: MIKKFDKKDEESGSGSNPFRHLEKSAVLQEARIFNETPINPRRCLHILTKILYLLNQGEHFGTTEATEAFFAMTRLFQSNDQTLRRMCYLTIKEMATISEDVIIVTSSLTKDMTGKEDVYRGPAIRALCRITDGTMLQAIERYMKQAIVDKVSSVSSSALVSSLHMMKISYDVVKRWVNEAQEAASSDNIMVQYHALGVLYHLKKNDRLAVSKMLNKFTKSGLKSQFAYCMLIRIASRLLKENEEGHESPVFDFIESCLRNKHEMVIYEAASAIIHLPNCTARELAPAVSVLQLFCSSPKPALRYAAVRTLNKVAMKHPSAVTACNLDLENLITDSNRSIATLAITTLLKTGSESSVDRLMKQISSFVSEISDEFKVVVVQAISALCQKYPRKHSVMMTFLSNMLRDDGGFEYKRAIVDCIIHIVEENPESKEAGLAHLCEFIEDCEHTVLATKILHLLGKEGPRTPVPSKYIRFIFNRVVLENEAVRAAAVSALAKFGAQNENLLPSILVLLQRCMMDTDDEVRDRATFYLNVLQQRQMALNATYIFNGLTVSVPGMEKALHQYTLEPSEKPFDMKSIPLATAPVFEQKAEITLVSTKPEKLAPSRQDIFQEQLAAIPEFMNLGPLFKSSEPVQLTEAETEYFVRCVKHMFTNHIVFQFDCTNTLNDQLLEKVTVQVEPSEAYEVLCCVPAPSLPYNQPGVCYTLVRLPEDDSIAAAGTFSCTMKFTVRDCDPDTGVPTEEGYDDEYVLEDLEVTVSDHIQKVMKPNFAAAWEEVGNTFEKEETFALSSTKTLEEAVNNIITFLGMQPCERSDKVPENKNSHSLYLAGVYRGGYDLLVRSRLALADGVTMQVTVRSKEGTPVDVILASVG.

Over residues 1–11 (MIKKFDKKDEE) the composition is skewed to basic and acidic residues. Residues 1–20 (MIKKFDKKDEESGSGSNPFR) are disordered. HEAT repeat units follow at residues 64 to 101 (TEAT…ISED), 283 to 320 (RELA…KHPS), 321 to 355 (AVTA…GSES), 356 to 392 (SVDR…KYPR), 395 to 430 (SVMM…ENPE), and 467 to 504 (PVPS…QNEN). Phosphothreonine is present on T594.

Belongs to the COPG family. Oligomeric complex. Binds to CDC42. Interacts with JAGN1. Interacts with TMED10 (via cytoplasmic domain).

It is found in the cytoplasm. The protein resides in the cytosol. Its subcellular location is the golgi apparatus membrane. The protein localises to the cytoplasmic vesicle. It localises to the COPI-coated vesicle membrane. In terms of biological role, the coatomer is a cytosolic protein complex that binds to dilysine motifs and reversibly associates with Golgi non-clathrin-coated vesicles, which further mediate biosynthetic protein transport from the ER, via the Golgi up to the trans Golgi network. Coatomer complex is required for budding from Golgi membranes, and is essential for the retrograde Golgi-to-ER transport of dilysine-tagged proteins. In mammals, the coatomer can only be recruited by membranes associated to ADP-ribosylation factors (ARFs), which are small GTP-binding proteins; the complex also influences the Golgi structural integrity, as well as the processing, activity, and endocytic recycling of LDL receptors. In Bos taurus (Bovine), this protein is Coatomer subunit gamma-2 (COPG2).